The chain runs to 115 residues: NADH-ubiquinone oxidoreductase chain 3 (115 aa).

A run of 3 helical transmembrane segments spans residues 4–24 (FIVLLVNISLASCLILIAFWL), 55–75 (FFLVAITFLLFDLEIALLLPL), and 87–107 (TMLTSFILVSVLAMGLAYEWL).

Belongs to the complex I subunit 3 family. Core subunit of respiratory chain NADH dehydrogenase (Complex I) which is composed of 45 different subunits. Interacts with TMEM186. Interacts with TMEM242.

It is found in the mitochondrion inner membrane. It carries out the reaction a ubiquinone + NADH + 5 H(+)(in) = a ubiquinol + NAD(+) + 4 H(+)(out). Functionally, core subunit of the mitochondrial membrane respiratory chain NADH dehydrogenase (Complex I) which catalyzes electron transfer from NADH through the respiratory chain, using ubiquinone as an electron acceptor. Essential for the catalytic activity of complex I. This is NADH-ubiquinone oxidoreductase chain 3 from Reithrodontomys megalotis (Western harvest mouse).